The primary structure comprises 351 residues: Hydroxymethylglutaryl-CoA synthase (351 aa).

Asp-28 is a binding site for (3S)-3-hydroxy-3-methylglutaryl-CoA. Residue Glu-80 is the Proton donor/acceptor of the active site. The (3S)-3-hydroxy-3-methylglutaryl-CoA site is built by Cys-112 and Thr-153. Residue Cys-112 is the Acyl-thioester intermediate of the active site. CoA is bound at residue Arg-199. Residues Thr-201 and His-234 each contribute to the (3S)-3-hydroxy-3-methylglutaryl-CoA site. His-234 serves as the catalytic Proton donor/acceptor. Lys-239 serves as a coordination point for CoA. Positions 243, 266, and 296 each coordinate (3S)-3-hydroxy-3-methylglutaryl-CoA.

The protein belongs to the thiolase-like superfamily. Archaeal HMG-CoA synthase family. In terms of assembly, interacts with acetoacetyl-CoA thiolase that catalyzes the precedent step in the pathway and with a DUF35 protein. The acetoacetyl-CoA thiolase/HMG-CoA synthase complex channels the intermediate via a fused CoA-binding site, which allows for efficient coupling of the endergonic thiolase reaction with the exergonic HMGCS reaction.

It carries out the reaction acetoacetyl-CoA + acetyl-CoA + H2O = (3S)-3-hydroxy-3-methylglutaryl-CoA + CoA + H(+). It functions in the pathway metabolic intermediate biosynthesis; (R)-mevalonate biosynthesis; (R)-mevalonate from acetyl-CoA: step 2/3. Functionally, catalyzes the condensation of acetyl-CoA with acetoacetyl-CoA to form 3-hydroxy-3-methylglutaryl-CoA (HMG-CoA). Functions in the mevalonate (MVA) pathway leading to isopentenyl diphosphate (IPP), a key precursor for the biosynthesis of isoprenoid compounds that are building blocks of archaeal membrane lipids. This Picrophilus torridus (strain ATCC 700027 / DSM 9790 / JCM 10055 / NBRC 100828 / KAW 2/3) protein is Hydroxymethylglutaryl-CoA synthase.